The following is a 332-amino-acid chain: MSTKEKLINHVMKEEPIGSRNKVTVVGVGMVGMASAVSILLKDLCDELALVDVMEDKLKGEVMDLQHGGLFLKTHKIVGDKDYSVTANSRVVVVTAGARQQEGESRLNLVQRNVNIFKFIIPNIVKYSPNCILMVVSNPVDILTYVAWKLSGFPRHRVIGSGTNLDSARFRHIMGEKLHLHPSSCHGWIVGEHGDSSVPVWSGVNVAGVSLQTLNPKMGAEGDTENWKAVHKMVVDGAYEVIKLKGYTSWAIGMSVADLVESIVKNLHKVHPVSTLVKGMHGVKDEVFLSVPCVLGNSGLTDVIHMTLKPEEEKQLVKSAETLWGVQKELTL.

NAD(+)-binding positions include 29–57 (GMVG…MEDK) and arginine 99. Residues arginine 106, asparagine 138, and arginine 169 each contribute to the substrate site. Position 138 (asparagine 138) interacts with NAD(+). Histidine 193 acts as the Proton acceptor in catalysis. Substrate is bound at residue threonine 248.

It belongs to the LDH/MDH superfamily. LDH family. As to quaternary structure, homotetramer.

Its subcellular location is the cytoplasm. The enzyme catalyses (S)-lactate + NAD(+) = pyruvate + NADH + H(+). It functions in the pathway fermentation; pyruvate fermentation to lactate; (S)-lactate from pyruvate: step 1/1. In terms of biological role, interconverts simultaneously and stereospecifically pyruvate and lactate with concomitant interconversion of NADH and NAD(+). This Sphyraena idiastes (Pelican barracuda) protein is L-lactate dehydrogenase A chain (ldha).